The primary structure comprises 54 residues: Low temperature-induced protein lt101.2 (54 aa).

Transmembrane regions (helical) follow at residues 2 to 22 (ASAT…GVFL) and 34 to 54 (LLLT…VLVA).

Belongs to the UPF0057 (PMP3) family.

It is found in the membrane. This chain is Low temperature-induced protein lt101.2 (LT101.2), found in Hordeum vulgare (Barley).